A 111-amino-acid chain; its full sequence is Ig heavy chain V-III region HPC76 (111 aa).

The Ig-like domain maps to 1–110; the sequence is ESGGGLVQPG…WGQGTTLTVS (110 aa).

This chain is Ig heavy chain V-III region HPC76, found in Mus musculus (Mouse).